The sequence spans 213 residues: Pyridoxine/pyridoxamine 5'-phosphate oxidase (213 aa).

Substrate contacts are provided by residues 10 to 13 (REEY) and Lys68. Residues 63 to 68 (RMLLLK), 78 to 79 (FT), Lys85, and Gln107 contribute to the FMN site. Substrate is bound by residues Tyr125, Arg129, and Ser133. FMN is bound by residues 142–143 (QS) and Trp186. Residue 192-194 (RLH) coordinates substrate. Residue Arg196 participates in FMN binding.

The protein belongs to the pyridoxamine 5'-phosphate oxidase family. Homodimer. FMN serves as cofactor.

It catalyses the reaction pyridoxamine 5'-phosphate + O2 + H2O = pyridoxal 5'-phosphate + H2O2 + NH4(+). The enzyme catalyses pyridoxine 5'-phosphate + O2 = pyridoxal 5'-phosphate + H2O2. Its pathway is cofactor metabolism; pyridoxal 5'-phosphate salvage; pyridoxal 5'-phosphate from pyridoxamine 5'-phosphate: step 1/1. The protein operates within cofactor metabolism; pyridoxal 5'-phosphate salvage; pyridoxal 5'-phosphate from pyridoxine 5'-phosphate: step 1/1. Functionally, catalyzes the oxidation of either pyridoxine 5'-phosphate (PNP) or pyridoxamine 5'-phosphate (PMP) into pyridoxal 5'-phosphate (PLP). The protein is Pyridoxine/pyridoxamine 5'-phosphate oxidase of Nocardioides sp. (strain ATCC BAA-499 / JS614).